The chain runs to 276 residues: Large ribosomal subunit protein uL2 (276 aa).

Disordered regions lie at residues 1–20 and 219–276; these read MGIK…TTND and TVRG…RRKK. The segment covering 7-20 has biased composition (polar residues); the sequence is NPTTNGRRNMTTND.

It belongs to the universal ribosomal protein uL2 family. Part of the 50S ribosomal subunit. Forms a bridge to the 30S subunit in the 70S ribosome.

Its function is as follows. One of the primary rRNA binding proteins. Required for association of the 30S and 50S subunits to form the 70S ribosome, for tRNA binding and peptide bond formation. It has been suggested to have peptidyltransferase activity; this is somewhat controversial. Makes several contacts with the 16S rRNA in the 70S ribosome. This is Large ribosomal subunit protein uL2 from Bacillus cereus (strain G9842).